Reading from the N-terminus, the 422-residue chain is L-threonine dehydratase biosynthetic IlvA (422 aa).

An N6-(pyridoxal phosphate)lysine modification is found at Lys-56. Pyridoxal 5'-phosphate contacts are provided by residues Asn-83, 189 to 193 (GGGGL), and Ser-315. An ACT-like domain is found at 339 to 413 (HYFILNFPQR…FDPSNIYINE (75 aa)).

This sequence belongs to the serine/threonine dehydratase family. As to quaternary structure, homotetramer. Pyridoxal 5'-phosphate serves as cofactor.

It carries out the reaction L-threonine = 2-oxobutanoate + NH4(+). It functions in the pathway amino-acid biosynthesis; L-isoleucine biosynthesis; 2-oxobutanoate from L-threonine: step 1/1. Catalyzes the anaerobic formation of alpha-ketobutyrate and ammonia from threonine in a two-step reaction. The first step involved a dehydration of threonine and a production of enamine intermediates (aminocrotonate), which tautomerizes to its imine form (iminobutyrate). Both intermediates are unstable and short-lived. The second step is the nonenzymatic hydrolysis of the enamine/imine intermediates to form 2-ketobutyrate and free ammonia. In the low water environment of the cell, the second step is accelerated by RidA. This chain is L-threonine dehydratase biosynthetic IlvA (ilvA), found in Staphylococcus aureus (strain Mu50 / ATCC 700699).